The following is a 245-amino-acid chain: tRNA pseudouridine synthase A (245 aa).

The Nucleophile role is filled by Asp52. Substrate is bound at residue Tyr110.

The protein belongs to the tRNA pseudouridine synthase TruA family. As to quaternary structure, homodimer.

It carries out the reaction uridine(38/39/40) in tRNA = pseudouridine(38/39/40) in tRNA. In terms of biological role, formation of pseudouridine at positions 38, 39 and 40 in the anticodon stem and loop of transfer RNAs. This chain is tRNA pseudouridine synthase A, found in Borrelia duttonii (strain Ly).